The chain runs to 524 residues: Bifunctional purine biosynthesis protein PurH (524 aa).

Positions 1–145 (MIKQALLSVS…KNHRDVTVIV (145 aa)) constitute an MGS-like domain.

It belongs to the PurH family.

It carries out the reaction (6R)-10-formyltetrahydrofolate + 5-amino-1-(5-phospho-beta-D-ribosyl)imidazole-4-carboxamide = 5-formamido-1-(5-phospho-D-ribosyl)imidazole-4-carboxamide + (6S)-5,6,7,8-tetrahydrofolate. The enzyme catalyses IMP + H2O = 5-formamido-1-(5-phospho-D-ribosyl)imidazole-4-carboxamide. It functions in the pathway purine metabolism; IMP biosynthesis via de novo pathway; 5-formamido-1-(5-phospho-D-ribosyl)imidazole-4-carboxamide from 5-amino-1-(5-phospho-D-ribosyl)imidazole-4-carboxamide (10-formyl THF route): step 1/1. Its pathway is purine metabolism; IMP biosynthesis via de novo pathway; IMP from 5-formamido-1-(5-phospho-D-ribosyl)imidazole-4-carboxamide: step 1/1. This is Bifunctional purine biosynthesis protein PurH from Cupriavidus metallidurans (strain ATCC 43123 / DSM 2839 / NBRC 102507 / CH34) (Ralstonia metallidurans).